The following is a 52-amino-acid chain: Alpha-crystallin B chain (52 aa).

The protein belongs to the small heat shock protein (HSP20) family. In terms of assembly, homodimer. Aggregates with homologous proteins, including alpha-A-crystallin and the small heat shock protein HSPB1, to form large heteromeric complexes.

Its function is as follows. May contribute to the transparency and refractive index of the lens. In Turdus merula (Common blackbird), this protein is Alpha-crystallin B chain (CRYAB).